The sequence spans 952 residues: Leucine--tRNA ligase (952 aa).

Residues 48 to 58 (PYLNGVLHAGH) carry the 'HIGH' region motif. Positions 644 to 648 (KLSKS) match the 'KMSKS' region motif. An ATP-binding site is contributed by Lys647.

Belongs to the class-I aminoacyl-tRNA synthetase family.

It localises to the cytoplasm. The enzyme catalyses tRNA(Leu) + L-leucine + ATP = L-leucyl-tRNA(Leu) + AMP + diphosphate. In Methanococcus vannielii (strain ATCC 35089 / DSM 1224 / JCM 13029 / OCM 148 / SB), this protein is Leucine--tRNA ligase.